Consider the following 139-residue polypeptide: Histone H2B (139 aa).

Residues 1-37 show a composition bias toward low complexity; sequence MAPKSVASKAPASQASKAPAAASKAPAKAAKTSAAPK. Residues 1–48 form a disordered region; it reads MAPKSVASKAPASQASKAPAAASKAPAKAAKTSAAPKDGAKKRSKKRV. Lys9 is modified (N6-acetyllysine; alternate). Lys9 is covalently cross-linked (Glycyl lysine isopeptide (Lys-Gly) (interchain with G-Cter in SUMO); alternate). Residue Ser13 is modified to Phosphoserine. At Lys17 the chain carries N6-acetyllysine. Lys134 participates in a covalent cross-link: Glycyl lysine isopeptide (Lys-Gly) (interchain with G-Cter in ubiquitin).

Belongs to the histone H2B family. As to quaternary structure, the nucleosome is a histone octamer containing two molecules each of H2A, H2B, H3 and H4 assembled in one H3-H4 heterotetramer and two H2A-H2B heterodimers. The octamer wraps approximately 147 bp of DNA. Monoubiquitinated by the UBC2-BRE1 complex to form H2BK123ub1. H2BK123ub1 gives a specific tag for epigenetic transcriptional activation and is also prerequisite for H3K4me and H3K79me formation. H2BK123ub1 also modulates the formation of double-strand breaks during meiosis and is a prerequisite for DNA-damage checkpoint activation. Post-translationally, phosphorylated to form H2BS10ph during progression through meiotic prophase. May be correlated with chromosome condensation. In terms of processing, acetylation of N-terminal lysines and particularly formation of H2BK11ac has a positive effect on transcription. Sumoylation to form H2BK6su occurs preferentially near the telomeres and represses gene transcription.

It is found in the nucleus. Its subcellular location is the chromosome. Its function is as follows. Core component of nucleosome. Nucleosomes wrap and compact DNA into chromatin, limiting DNA accessibility to the cellular machineries which require DNA as a template. Histones thereby play a central role in transcription regulation, DNA repair, DNA replication and chromosomal stability. DNA accessibility is regulated via a complex set of post-translational modifications of histones, also called histone code, and nucleosome remodeling. In Cryptococcus neoformans var. neoformans serotype D (strain B-3501A) (Filobasidiella neoformans), this protein is Histone H2B (HTB1).